Here is a 920-residue protein sequence, read N- to C-terminus: 3-hydroxy-3-methylglutaryl-coenzyme A reductase (920 aa).

Residues 12-32 (FCASHPWEVIVALLTITACML) form a helical membrane-spanning segment. Residue asparagine 37 is glycosylated (N-linked (GlcNAc...) asparagine). Residues 62–85 (GAGSGASGTIPPSSMGGSATSSRH) form a disordered region. Over residues 71-82 (IPPSSMGGSATS) the composition is skewed to polar residues. Positions 106–263 (DVILMTIVRC…MTFYPACLSL (158 aa)) constitute an SSD domain. The next 5 helical transmembrane spans lie at 107–129 (VILM…CSLH), 136–156 (VLGI…TAII), 170–190 (LFFL…QLAL), 208–228 (LLGP…GVGT), and 237–257 (VLCM…MTFY). N-linked (GlcNAc...) asparagine glycosylation is found at asparagine 342 and asparagine 346. A helical transmembrane segment spans residues 364 to 384 (SADHIVISIVLIALVVKFICF). Residues 385–498 (DNRDPLPDQL…EEIVSIVHAG (114 aa)) form a linker region. Asparagine 443 and asparagine 475 each carry an N-linked (GlcNAc...) asparagine glycan. The interval 499–829 (GTHCPLHKIE…TCTMPSLEVG (331 aa)) is catalytic. Catalysis depends on charge relay system residues glutamate 586, lysine 717, and aspartate 793. N-linked (GlcNAc...) asparagine glycans are attached at residues asparagine 797 and asparagine 802. Histidine 892 functions as the Proton donor in the catalytic mechanism. N-linked (GlcNAc...) asparagine glycosylation is found at asparagine 896 and asparagine 910.

It belongs to the HMG-CoA reductase family. In terms of tissue distribution, highly expressed in embryonic gonadal mesoderm, where expression is initially broad, and then becomes restricted to a segmental pattern at stage 11. Expression is then further restricted to a cluster of cells in each of parasegments 10, 11 and 12, corresponding to the developing gonadal mesoderm. Not expressed in pole cells.

The protein localises to the endoplasmic reticulum membrane. The enzyme catalyses (R)-mevalonate + 2 NADP(+) + CoA = (3S)-3-hydroxy-3-methylglutaryl-CoA + 2 NADPH + 2 H(+). It participates in metabolic intermediate biosynthesis; (R)-mevalonate biosynthesis; (R)-mevalonate from acetyl-CoA: step 3/3. The activity of HMG-CoA-reductase is suppressed by exogenous mevalonate. Synthesis of mevalonate for the production of non-sterol isoprenoids, which are essential for growth differentiation. Provides spatial information during embryogenesis to guide migrating primordial germ cells (the pole cells) from the ectoderm to the mesoderm. Also required for association of the pole cells with the gonadal mesoderm. This is 3-hydroxy-3-methylglutaryl-coenzyme A reductase (Hmgcr) from Drosophila melanogaster (Fruit fly).